Consider the following 549-residue polypeptide: Glucose-6-phosphate isomerase (549 aa).

The Proton donor role is filled by Glu355. Catalysis depends on residues His386 and Lys514.

The protein belongs to the GPI family.

It localises to the cytoplasm. The catalysed reaction is alpha-D-glucose 6-phosphate = beta-D-fructose 6-phosphate. Its pathway is carbohydrate biosynthesis; gluconeogenesis. The protein operates within carbohydrate degradation; glycolysis; D-glyceraldehyde 3-phosphate and glycerone phosphate from D-glucose: step 2/4. In terms of biological role, catalyzes the reversible isomerization of glucose-6-phosphate to fructose-6-phosphate. In Salmonella paratyphi A (strain AKU_12601), this protein is Glucose-6-phosphate isomerase.